Here is a 263-residue protein sequence, read N- to C-terminus: Phosphoinositide-3-kinase-interacting protein 1 (263 aa).

A signal peptide spans 1–21 (MLLAWVQAFLVSNMLLAEAYG). Residues 22–168 (SGGCFWDNGH…NSKEKKDLGT (147 aa)) are Extracellular-facing. The Kringle domain occupies 24 to 101 (GCFWDNGHLY…EKRPCENLSC (78 aa)). 3 cysteine pairs are disulfide-bonded: Cys25-Cys101, Cys46-Cys82, and Cys70-Cys96. N-linked (GlcNAc...) asparagine glycosylation occurs at Asn98. The chain crosses the membrane as a helical span at residues 169-189 (LGYVLGITMMVIIVAIGAGII). Over 190 to 263 (LGYSYKRGKD…LMGQAGTPGA (74 aa)) the chain is Cytoplasmic. Over residues 242-251 (QTPVDPQEGS) the composition is skewed to polar residues. The tract at residues 242–263 (QTPVDPQEGSTPLMGQAGTPGA) is disordered.

It localises to the cell membrane. Functionally, negative regulator of hepatic phosphatidylinositol 3-kinase (PI3K) activity. In Pongo abelii (Sumatran orangutan), this protein is Phosphoinositide-3-kinase-interacting protein 1 (PIK3IP1).